A 102-amino-acid chain; its full sequence is Hemoglobin subunit beta-Z (102 aa).

Positions 1–102 constitute a Globin domain; sequence FGNLSSAQAI…VANALSHKYH (102 aa). Heme b contacts are provided by His19 and His48.

It belongs to the globin family. As to quaternary structure, heterotetramer of two alpha chains and two beta chains.

This is an embryonic beta chain. The chain is Hemoglobin subunit beta-Z (HBBZ) from Mesocricetus auratus (Golden hamster).